The chain runs to 335 residues: Phospho-N-acetylmuramoyl-pentapeptide-transferase (335 aa).

A run of 10 helical transmembrane segments spans residues 3 to 23 (LTIL…PHFI), 53 to 73 (GGTV…LVYF), 78 to 98 (SLGL…IGFL), 118 to 138 (FTLQ…PSGI), 143 to 163 (VFGY…FWVV), 174 to 194 (GIDG…GVIA), 200 to 220 (FDVL…FLFN), 226 to 246 (IFMG…ISIA), 251 to 271 (WTLL…MLQV), and 314 to 334 (VDAF…AILY).

This sequence belongs to the glycosyltransferase 4 family. MraY subfamily. Requires Mg(2+) as cofactor.

The protein resides in the cell membrane. The catalysed reaction is UDP-N-acetyl-alpha-D-muramoyl-L-alanyl-gamma-D-glutamyl-L-lysyl-D-alanyl-D-alanine + di-trans,octa-cis-undecaprenyl phosphate = Mur2Ac(oyl-L-Ala-gamma-D-Glu-L-Lys-D-Ala-D-Ala)-di-trans,octa-cis-undecaprenyl diphosphate + UMP. It functions in the pathway cell wall biogenesis; peptidoglycan biosynthesis. In terms of biological role, catalyzes the initial step of the lipid cycle reactions in the biosynthesis of the cell wall peptidoglycan: transfers peptidoglycan precursor phospho-MurNAc-pentapeptide from UDP-MurNAc-pentapeptide onto the lipid carrier undecaprenyl phosphate, yielding undecaprenyl-pyrophosphoryl-MurNAc-pentapeptide, known as lipid I. The polypeptide is Phospho-N-acetylmuramoyl-pentapeptide-transferase (Streptococcus equi subsp. zooepidemicus (strain MGCS10565)).